The chain runs to 204 residues: Protein GrpE (204 aa).

A disordered region spans residues 1 to 42 (MTDETAKNGPDAAADAQIEPQVQEETNSTAEDAGQDNNPTAA). A compositionally biased stretch (polar residues) spans 23–41 (QEETNSTAEDAGQDNNPTA).

The protein belongs to the GrpE family. As to quaternary structure, homodimer.

Its subcellular location is the cytoplasm. In terms of biological role, participates actively in the response to hyperosmotic and heat shock by preventing the aggregation of stress-denatured proteins, in association with DnaK and GrpE. It is the nucleotide exchange factor for DnaK and may function as a thermosensor. Unfolded proteins bind initially to DnaJ; upon interaction with the DnaJ-bound protein, DnaK hydrolyzes its bound ATP, resulting in the formation of a stable complex. GrpE releases ADP from DnaK; ATP binding to DnaK triggers the release of the substrate protein, thus completing the reaction cycle. Several rounds of ATP-dependent interactions between DnaJ, DnaK and GrpE are required for fully efficient folding. The chain is Protein GrpE from Allorhizobium ampelinum (strain ATCC BAA-846 / DSM 112012 / S4) (Agrobacterium vitis (strain S4)).